Here is a 360-residue protein sequence, read N- to C-terminus: Phosphoserine aminotransferase (360 aa).

Arginine 41 contributes to the L-glutamate binding site. Pyridoxal 5'-phosphate-binding positions include 75-76, tryptophan 101, threonine 151, aspartate 171, and glutamine 194; that span reads AS. Lysine 195 is subject to N6-(pyridoxal phosphate)lysine. Residue 236–237 participates in pyridoxal 5'-phosphate binding; sequence NT.

The protein belongs to the class-V pyridoxal-phosphate-dependent aminotransferase family. SerC subfamily. In terms of assembly, homodimer. Requires pyridoxal 5'-phosphate as cofactor.

It localises to the cytoplasm. It catalyses the reaction O-phospho-L-serine + 2-oxoglutarate = 3-phosphooxypyruvate + L-glutamate. The enzyme catalyses 4-(phosphooxy)-L-threonine + 2-oxoglutarate = (R)-3-hydroxy-2-oxo-4-phosphooxybutanoate + L-glutamate. It functions in the pathway amino-acid biosynthesis; L-serine biosynthesis; L-serine from 3-phospho-D-glycerate: step 2/3. It participates in cofactor biosynthesis; pyridoxine 5'-phosphate biosynthesis; pyridoxine 5'-phosphate from D-erythrose 4-phosphate: step 3/5. In terms of biological role, catalyzes the reversible conversion of 3-phosphohydroxypyruvate to phosphoserine and of 3-hydroxy-2-oxo-4-phosphonooxybutanoate to phosphohydroxythreonine. This chain is Phosphoserine aminotransferase, found in Herpetosiphon aurantiacus (strain ATCC 23779 / DSM 785 / 114-95).